The sequence spans 153 residues: Prefoldin subunit alpha (153 aa).

A disordered region spans residues lysine 126–glutamate 153. Residues histidine 143–glutamate 153 are compositionally biased toward basic and acidic residues.

It belongs to the prefoldin alpha subunit family. In terms of assembly, heterohexamer of two alpha and four beta subunits.

Its subcellular location is the cytoplasm. Its function is as follows. Molecular chaperone capable of stabilizing a range of proteins. Seems to fulfill an ATP-independent, HSP70-like function in archaeal de novo protein folding. The chain is Prefoldin subunit alpha from Methanoregula boonei (strain DSM 21154 / JCM 14090 / 6A8).